Here is a 262-residue protein sequence, read N- to C-terminus: Adenosylcobinamide-GDP ribazoletransferase (262 aa).

The next 8 membrane-spanning stretches (helical) occupy residues 4 to 26 (AWNG…SIAW), 37 to 57 (CMPL…ALFS), 59 to 79 (FSFS…IWMA), 112 to 132 (VGAF…LFLY), 139 to 159 (IPPA…AWLL), 183 to 203 (AIWA…STAI), 205 to 225 (VQTG…AKPW), and 237 to 257 (VLGA…WLLH).

The protein belongs to the CobS family. Mg(2+) is required as a cofactor.

The protein localises to the cell membrane. The enzyme catalyses alpha-ribazole + adenosylcob(III)inamide-GDP = adenosylcob(III)alamin + GMP + H(+). The catalysed reaction is alpha-ribazole 5'-phosphate + adenosylcob(III)inamide-GDP = adenosylcob(III)alamin 5'-phosphate + GMP + H(+). It participates in cofactor biosynthesis; adenosylcobalamin biosynthesis; adenosylcobalamin from cob(II)yrinate a,c-diamide: step 7/7. Its function is as follows. Joins adenosylcobinamide-GDP and alpha-ribazole to generate adenosylcobalamin (Ado-cobalamin). Also synthesizes adenosylcobalamin 5'-phosphate from adenosylcobinamide-GDP and alpha-ribazole 5'-phosphate. This Geobacillus kaustophilus (strain HTA426) protein is Adenosylcobinamide-GDP ribazoletransferase.